A 133-amino-acid chain; its full sequence is MQKSNIVEYKGLGRRKSSIARVKLVPGSGKVFINDRQPENYFPNKLVIQDMMQPLVLTKTAETYDVYVKVIGGGFNGQAGAIRLGITRALIQTREDLKTDLRKAGLVTRDSRVKERKKFGLYGARRAPQFTKR.

Belongs to the universal ribosomal protein uS9 family.

The protein is Small ribosomal subunit protein uS9 of Ureaplasma urealyticum serovar 10 (strain ATCC 33699 / Western).